Here is a 259-residue protein sequence, read N- to C-terminus: MNILAPVRRDRVLAELPQCLRKEAALHVRKDFHPRVTCACQEHRTGTVGFKISKVIVVGDLSVGKTCLINRFCKDTFDKNYKATIGVDFEMERFEVLGVPFSLQLWDTAGQERFKCIASTYYRGAQAIIIVFNLNDVASLEHTKQWLADALKENDPSSVLLFLVGSKKDLSTPAQYVLMEKDALKVAHEMKAEYWAVSSLTGENVREFFFRVAALTFEANVLAELEKSGSRRIGDVVRLNSDDSNLYLTASKKKPACCP.

Residue Met-1 is modified to N-acetylmethionine. Ser-62, Val-63, Gly-64, Lys-65, Thr-66, Asp-78, Tyr-81, and Thr-84 together coordinate GTP. A Mg(2+)-binding site is contributed by Thr-66. Positions 71–89 (RFCKDTFDKNYKATIGVDF) match the Switch 1 motif. Thr-84 and Asp-107 together coordinate Mg(2+). Positions 108 to 127 (TAGQERFKCIASTYYRGAQA) match the Switch 2 motif. Residues Gly-110, Lys-167, Asp-169, and Ser-198 each contribute to the GTP site. Residues Ser-241 and Ser-244 each carry the phosphoserine modification. Residues Cys-257 and Cys-258 are each lipidated (S-geranylgeranyl cysteine).

This sequence belongs to the small GTPase superfamily. Rab family. As to quaternary structure, interacts with RILP. The GTP-bound form interacts with REP15. Requires Mg(2+) as cofactor.

It localises to the cytoplasm. It is found in the golgi apparatus. The protein localises to the cytoplasmic vesicle. Its subcellular location is the phagosome. The protein resides in the phagosome membrane. It localises to the cell projection. It is found in the cilium. The protein localises to the cytoskeleton. Its subcellular location is the microtubule organizing center. The protein resides in the centrosome. It localises to the centriole. The enzyme catalyses GTP + H2O = GDP + phosphate + H(+). With respect to regulation, regulated by guanine nucleotide exchange factors (GEFs) which promote the exchange of bound GDP for free GTP. Regulated by GTPase activating proteins (GAPs) which increase the GTP hydrolysis activity. Inhibited by GDP dissociation inhibitors (GDIs). Functionally, the small GTPases Rab are key regulators of intracellular membrane trafficking, from the formation of transport vesicles to their fusion with membranes. Rabs cycle between an inactive GDP-bound form and an active GTP-bound form that is able to recruit to membranes different sets of downstream effectors directly responsible for vesicle formation, movement, tethering and fusion. RAB34 transports protein involved in the redistribution of lysosomes to the peri-Golgi region. Plays a role in the maturation of phagosomes that engulf pathogens, such as S.aureus and M.tuberculosis. Plays a role in the fusion of phagosomes with lysosomes. Required for the early steps of intracellular ciliogenesis, the cilium assembly pathway initiated by trafficking and docking of ciliary vesicles to the centrioles in the cytoplasm, followed by axoneme formation in the cytoplasm. After axoneme elongation, the centrioles migrate close to the cell surface so that ciliary vesicles can fuse with the plasma membrane to expose cilia to the extracellular space. It seems dispensable for ciliogenesis via the extracellular pathway where cilium assembly begins after migration and docking of the centriole to the plasma membrane. Also acts as a positive regulator of hedgehog signaling and regulates ciliary function. The sequence is that of Ras-related protein Rab-34 (RAB34) from Sus scrofa (Pig).